The sequence spans 1034 residues: Potassium-transporting ATPase alpha chain 1 (1034 aa).

The Cytoplasmic portion of the chain corresponds to 2 to 97 (GKAENYELYQ…NALRPPRGTP (96 aa)). Phosphotyrosine occurs at positions 7 and 10. The segment at 13 to 40 (ELGPGPSGDMAAKMSKKKAGRGGGKRKE) is disordered. A compositionally biased stretch (basic residues) spans 26–39 (MSKKKAGRGGGKRK). Ser27 carries the phosphoserine; by PKA and PKC modification. A helical membrane pass occupies residues 98-118 (EYVKFARQLAGGLQCLMWVAA). At 119-141 (AICLIAFAIQASEGDLTTDDNLY) the chain is on the lumenal side. Residues 142-162 (LALALIAVVVVTGCFGYYQEF) traverse the membrane as a helical segment. The Cytoplasmic portion of the chain corresponds to 163–298 (KSTNIIASFK…NEKTPIAIEI (136 aa)). The interval 222–244 (KVDNSSLTGESEPQTRSPECTHE) is disordered. Residues 225–239 (NSSLTGESEPQTRSP) show a composition bias toward polar residues. The chain crosses the membrane as a helical span at residues 299–318 (EHFVDIIAGLAILFGATFFI). Over 319 to 330 (VAMCIGYTFLRA) the chain is Lumenal. Residues 331-348 (MVFFMAIVVAYVPEGLLA) traverse the membrane as a helical segment. Residues Val339, Ala340, Val342, and Glu344 each coordinate K(+). Over 349 to 782 (TVTVCLSLTA…EQGRLIFDNL (434 aa)) the chain is Cytoplasmic. Asp386 functions as the 4-aspartylphosphate intermediate in the catalytic mechanism. Mg(2+) contacts are provided by Asp386 and Thr388. 2 positions are modified to phosphoserine: Ser462 and Ser600. Mg(2+) contacts are provided by Asp727 and Asp731. The helical transmembrane segment at 783 to 802 (KKSIAYTLTKNIPELTPYLI) threads the bilayer. Glu796 is a binding site for K(+). At 803–812 (YITVSVPLPL) the chain is on the lumenal side. The chain crosses the membrane as a helical span at residues 813–833 (GCITILFIELCTDIFPSVSLA). Glu821 is a K(+) binding site. Residues 834 to 853 (YEKAESDIMHLRPRNPKRDR) are Cytoplasmic-facing. Ser839 is modified (phosphoserine). The chain crosses the membrane as a helical span at residues 854–876 (LVNEPLAAYSYFQIGAIQSFAGF). Residues 877 to 928 (TDYFTAMAQEGWFPLLCVGLRPQWENHHLQDLQDSYGQEWTFGQRLYQQYTC) lie on the Lumenal side of the membrane. Residues 929-948 (YTVFFISIEMCQIADVLIRK) form a helical membrane-spanning segment. The Cytoplasmic portion of the chain corresponds to 949 to 962 (TRRLSAFQQGFFRN). At Ser953 the chain carries Phosphoserine; by PKA. A helical membrane pass occupies residues 963 to 981 (RILVIAIVFQVCIGCFLCY). The Lumenal portion of the chain corresponds to 982–996 (CPGMPNIFNFMPIRF). Residues 997 to 1017 (QWWLVPMPFGLLIFVYDEIRK) traverse the membrane as a helical segment. Residues 1018–1034 (LGVRCCPGSWWDQELYY) are Cytoplasmic-facing.

It belongs to the cation transport ATPase (P-type) (TC 3.A.3) family. Type IIC subfamily. In terms of assembly, the gastric H(+)/K(+) ATPase pump is composed of the catalytic alpha subunit ATP4A and the regulatory beta subunit ATP4B. Interacts (via the P-domain) with ATP4B (via N-terminus); this interaction stabilizes the lumenal-open E2 conformation state and prevents the reverse reaction of the transport cycle.

The protein resides in the apical cell membrane. Its subcellular location is the cell membrane. It catalyses the reaction K(+)(out) + ATP + H2O + H(+)(in) = K(+)(in) + ADP + phosphate + 2 H(+)(out). Its activity is regulated as follows. Down-regulated by K(+)-competitive acid blockers (P-CABs) such as vonoprazan. Functionally, the catalytic subunit of the gastric H(+)/K(+) ATPase pump which transports H(+) ions in exchange for K(+) ions across the apical membrane of parietal cells. Uses ATP as an energy source to pump H(+) ions to the gastric lumen while transporting K(+) ion from the lumen into the cell. Remarkably generates a million-fold proton gradient across the gastric parietal cell membrane, acidifying the gastric juice down to pH 1. Within a transport cycle, the transfer of a H(+) ion across the membrane is coupled to ATP hydrolysis and is associated with a transient phosphorylation that shifts the pump conformation from inward-facing (E1) to outward-facing state (E2). The release of the H(+) ion in the stomach lumen is followed by binding of K(+) ion converting the pump conformation back to the E1 state. The protein is Potassium-transporting ATPase alpha chain 1 (ATP4A) of Sus scrofa (Pig).